The chain runs to 213 residues: Redox-sensing transcriptional repressor Rex (213 aa).

Positions 16–55 (IYYRYLRLLSNSGKNRVSSTELAEAVKVDSATIRRDFSYF) form a DNA-binding region, H-T-H motif. 90–95 (GVGNLG) provides a ligand contact to NAD(+).

This sequence belongs to the transcriptional regulatory Rex family. In terms of assembly, homodimer.

It localises to the cytoplasm. Functionally, modulates transcription in response to changes in cellular NADH/NAD(+) redox state. In Ligilactobacillus salivarius (strain UCC118) (Lactobacillus salivarius), this protein is Redox-sensing transcriptional repressor Rex.